The chain runs to 375 residues: Fluoride export protein 1 (375 aa).

The Cytoplasmic portion of the chain corresponds to 1–11 (MIFNPVISNHK). Residues 12–32 (LSHYIHVFCTFTTFCILGTET) form a helical membrane-spanning segment. Topologically, residues 33–34 (RQ) are extracellular. Residues 35–55 (AITALSTYTPAFVTAPTVLWS) form a helical membrane-spanning segment. Residues 56 to 79 (NCSSCMLMGIMQSLNAYTWMKDHQ) are Cytoplasmic-facing. A helical membrane pass occupies residues 80–100 (VLFLGVTTGYCGALSSFSSML). The Extracellular segment spans residues 101–127 (LEMFEHSTNLTNGNIANHTKLPNRAYG). Residues asparagine 109 and asparagine 117 are each glycosylated (N-linked (GlcNAc...) asparagine). Residues 128-148 (IMEFLSVLLVHLMVSMGSLIF) traverse the membrane as a helical segment. Residues 149–213 (GRQLGKEVIV…FKKFFDIVDK (65 aa)) lie on the Cytoplasmic side of the membrane. A helical membrane pass occupies residues 214–234 (LAYALAFPLIILFVVLCAYYE). N-linked (GlcNAc...) asparagine glycosylation occurs at asparagine 235. Residues 235 to 241 (NYSRGKW) lie on the Extracellular side of the membrane. Residues 242-262 (TLPCLFGIFAGFLRYWLAEMF) form a helical membrane-spanning segment. Residues 263-268 (NKTNKK) are Cytoplasmic-facing. The chain crosses the membrane as a helical span at residues 269–289 (FPLGTFLANVFATLLIGIFTM). At 290–310 (VQRGKKHFSTDVPIVNSLNSC) the chain is on the extracellular side. A helical transmembrane segment spans residues 311-331 (HIVSALISGFCGTLSTISTFI). The Cytoplasmic segment spans residues 332-338 (NEGYKLS). The chain crosses the membrane as a helical span at residues 339-359 (FINMLIYYTVSIAISYCLLVI). The Extracellular segment spans residues 360–375 (TLGSYAWTRGLTNPIC).

This sequence belongs to the fluoride channel Fluc/FEX (TC 1.A.43) family.

The protein resides in the cell membrane. The enzyme catalyses fluoride(in) = fluoride(out). In terms of biological role, fluoride channel required for the rapid expulsion of cytoplasmic fluoride. The sequence is that of Fluoride export protein 1 from Saccharomyces cerevisiae (strain ATCC 204508 / S288c) (Baker's yeast).